Here is a 552-residue protein sequence, read N- to C-terminus: Carotenoid cleavage dioxygenase 8 homolog A, chloroplastic (552 aa).

The transit peptide at 1-43 (MATSLTLIATPCTAPRSSSSFALAPRLPPRCSNATAARRRAVR) directs the protein to the chloroplast. Positions 32–73 (SNATAARRRAVRATTLQSDQEPAGSGDSGATTTKLSASTSVR) are disordered. Residues 59–72 (SGATTTKLSASTSV) show a composition bias toward polar residues. Fe cation is bound by residues His239, His289, His356, and His543.

Belongs to the carotenoid oxygenase family. It depends on Fe(2+) as a cofactor. As to expression, highly expressed in panicles, inflorescences and parenchyma cells of the root stele, and at lower levels in shoot apex, leaf buds and xylem parenchyma cells of the stem.

The protein localises to the plastid. It localises to the chloroplast. In terms of biological role, may be involved in strigolactones biosynthesis. This Oryza sativa subsp. japonica (Rice) protein is Carotenoid cleavage dioxygenase 8 homolog A, chloroplastic (CCD8A).